Here is a 274-residue protein sequence, read N- to C-terminus: Diaminopimelate epimerase (274 aa).

Substrate-binding residues include Asn-11, Gln-44, and Asn-64. The active-site Proton donor is the Cys-73. Residues 74–75, Asn-157, Asn-190, and 208–209 contribute to the substrate site; these read GN and ER. Residue Cys-217 is the Proton acceptor of the active site. 218–219 serves as a coordination point for substrate; it reads GS.

Belongs to the diaminopimelate epimerase family. In terms of assembly, homodimer.

The protein resides in the cytoplasm. It catalyses the reaction (2S,6S)-2,6-diaminopimelate = meso-2,6-diaminopimelate. It functions in the pathway amino-acid biosynthesis; L-lysine biosynthesis via DAP pathway; DL-2,6-diaminopimelate from LL-2,6-diaminopimelate: step 1/1. In terms of biological role, catalyzes the stereoinversion of LL-2,6-diaminopimelate (L,L-DAP) to meso-diaminopimelate (meso-DAP), a precursor of L-lysine and an essential component of the bacterial peptidoglycan. This is Diaminopimelate epimerase from Sodalis glossinidius (strain morsitans).